Consider the following 272-residue polypeptide: Imidazole glycerol phosphate synthase subunit HisF (272 aa).

Residues aspartate 12 and aspartate 131 contribute to the active site.

Belongs to the HisA/HisF family. Heterodimer of HisH and HisF.

It is found in the cytoplasm. It catalyses the reaction 5-[(5-phospho-1-deoxy-D-ribulos-1-ylimino)methylamino]-1-(5-phospho-beta-D-ribosyl)imidazole-4-carboxamide + L-glutamine = D-erythro-1-(imidazol-4-yl)glycerol 3-phosphate + 5-amino-1-(5-phospho-beta-D-ribosyl)imidazole-4-carboxamide + L-glutamate + H(+). The protein operates within amino-acid biosynthesis; L-histidine biosynthesis; L-histidine from 5-phospho-alpha-D-ribose 1-diphosphate: step 5/9. In terms of biological role, IGPS catalyzes the conversion of PRFAR and glutamine to IGP, AICAR and glutamate. The HisF subunit catalyzes the cyclization activity that produces IGP and AICAR from PRFAR using the ammonia provided by the HisH subunit. In Methanopyrus kandleri (strain AV19 / DSM 6324 / JCM 9639 / NBRC 100938), this protein is Imidazole glycerol phosphate synthase subunit HisF.